The sequence spans 306 residues: Pantothenate kinase (306 aa).

ATP is bound at residue 91–98 (GSVAVGKS).

Belongs to the prokaryotic pantothenate kinase family.

The protein resides in the cytoplasm. It catalyses the reaction (R)-pantothenate + ATP = (R)-4'-phosphopantothenate + ADP + H(+). Its pathway is cofactor biosynthesis; coenzyme A biosynthesis; CoA from (R)-pantothenate: step 1/5. In Streptococcus pyogenes serotype M12 (strain MGAS2096), this protein is Pantothenate kinase.